A 242-amino-acid chain; its full sequence is tRNA (guanine-N(1)-)-methyltransferase (242 aa).

Residues glycine 111 and 130-135 (IGDYVL) each bind S-adenosyl-L-methionine.

It belongs to the RNA methyltransferase TrmD family. In terms of assembly, homodimer.

The protein localises to the cytoplasm. It carries out the reaction guanosine(37) in tRNA + S-adenosyl-L-methionine = N(1)-methylguanosine(37) in tRNA + S-adenosyl-L-homocysteine + H(+). Its function is as follows. Specifically methylates guanosine-37 in various tRNAs. This Aster yellows witches'-broom phytoplasma (strain AYWB) protein is tRNA (guanine-N(1)-)-methyltransferase.